The chain runs to 302 residues: Taste receptor type 2 member 104 (302 aa).

Topologically, residues 1 to 7 (MLSALES) are extracellular. A helical transmembrane segment spans residues 8–28 (ILLSVATSEAMLGVLGNTFIV). Residues 29–43 (LVNYTDWVRNKKLSK) are Cytoplasmic-facing. Residues 44–64 (INFILTGLAISRIFTIWIITL) traverse the membrane as a helical segment. Residues 65–87 (DAYTKVFLLTMLMPSSLHECMSY) lie on the Extracellular side of the membrane. The helical transmembrane segment at 88 to 108 (IWVIINHLSVWFSTSLGIFYF) threads the bilayer. Over 109 to 128 (LKIANFSHYIFLWMKRRADK) the chain is Cytoplasmic. The chain crosses the membrane as a helical span at residues 129–149 (VFVFLIVFLIITWLASFPLAV). At 150-182 (KVIKDVKIYQSNTSWLIHLEKSELLINYVFANM) the chain is on the extracellular side. A glycan (N-linked (GlcNAc...) asparagine) is linked at asparagine 161. A helical membrane pass occupies residues 183 to 203 (GPISLFIVAIIACFLLTISLW). Over 204-229 (RHSRQMQSIGSGFRDLNTEAHMKAMK) the chain is Cytoplasmic. A helical transmembrane segment spans residues 230–250 (VLIAFIILFILYFLGILIETL). The Extracellular segment spans residues 251-259 (CLFLTNNKL). Residues 260–280 (LFIFGFTLSAMYPCCHSFILI) form a helical membrane-spanning segment. The Cytoplasmic portion of the chain corresponds to 281 to 302 (LTSRELKQATMRALQRLKCCET).

The protein belongs to the G-protein coupled receptor T2R family.

The protein localises to the membrane. Putative taste receptor which may play a role in the perception of bitterness. This is Taste receptor type 2 member 104 from Mus musculus (Mouse).